The chain runs to 239 residues: Probable transcriptional regulatory protein BT9727_0453 (239 aa).

It belongs to the TACO1 family. YeeN subfamily.

The protein resides in the cytoplasm. The sequence is that of Probable transcriptional regulatory protein BT9727_0453 from Bacillus thuringiensis subsp. konkukian (strain 97-27).